Here is a 344-residue protein sequence, read N- to C-terminus: Heat-inducible transcription repressor HrcA (344 aa).

This sequence belongs to the HrcA family.

Negative regulator of class I heat shock genes (grpE-dnaK-dnaJ and groELS operons). Prevents heat-shock induction of these operons. This chain is Heat-inducible transcription repressor HrcA, found in Streptococcus pyogenes serotype M1.